The chain runs to 246 residues: Large ribosomal subunit protein uL30 (246 aa).

Position 1 is an N-acetylmethionine (M1). 4 tandem repeats follow at residues 7 to 17 (KKVPSVPESLL), 18 to 28 (KRRQAYAAAKA), 29 to 40 (KRLKRLLAQKKF), and 41 to 52 (RKAQRKIIYERA). The interval 7-52 (KKVPSVPESLLKRRQAYAAAKAKRLKRLLAQKKFRKAQRKIIYERA) is 4 X 12 AA tandem repeats.

The protein belongs to the universal ribosomal protein uL30 family. Component of the large ribosomal subunit.

The protein resides in the cytoplasm. Its function is as follows. Component of the large ribosomal subunit. The ribosome is a large ribonucleoprotein complex responsible for the synthesis of proteins in the cell. Binds to G-rich structures in 28S rRNA and in mRNAs. Plays a regulatory role in the translation apparatus; inhibits cell-free translation of mRNAs. The sequence is that of Large ribosomal subunit protein uL30 (RPL7) from Gallus gallus (Chicken).